We begin with the raw amino-acid sequence, 263 residues long: Lens fiber major intrinsic protein (263 aa).

Residues 1–12 are Cytoplasmic-facing; it reads MWELRSASFWRA. A helical membrane pass occupies residues 13–30; the sequence is IFAEFFATLFYVFFGLGA. The Extracellular segment spans residues 31 to 40; it reads SLRWAPGPLH. The helical transmembrane segment at 41-59 threads the bilayer; that stretch reads VLQVALAFGLALATLVQAV. The Cytoplasmic portion of the chain corresponds to 60–63; that stretch reads GHIS. Positions 64–76 form an intramembrane region, discontinuously helical; that stretch reads GAHVNPAVTFAFL. Positions 68–70 match the NPA 1 motif; sequence NPA. Residues 77-85 lie on the Cytoplasmic side of the membrane; it reads VGSQMSLLR. A helical membrane pass occupies residues 86–106; that stretch reads AICYVVAQLLGAVAGAAVLYS. Residues 107-126 lie on the Extracellular side of the membrane; that stretch reads VTPPAVRGNLALNTLHPGVS. The helical transmembrane segment at 127–147 threads the bilayer; that stretch reads VGQATIVEIFLTLQFVLCIFA. Over 148–157 the chain is Cytoplasmic; that stretch reads TYDERRNGRL. A helical membrane pass occupies residues 158-175; the sequence is GSVALAVGFSLTLGHLFG. The Extracellular portion of the chain corresponds to 176–177; it reads MY. Residues 178 to 193 constitute an intramembrane region (discontinuously helical); sequence YTGAGMNPARSFAPAI. Residues 184-186 carry the NPA 2 motif; that stretch reads NPA. Topologically, residues 194-200 are extracellular; that stretch reads LTRNFTN. Residues 201 to 218 form a helical membrane-spanning segment; it reads HWVYWVGPVIGAGLGSLL. Residues 219 to 263 are Cytoplasmic-facing; the sequence is YDFLLFPRLKSVSERLSILKGTRPSESNGQPEVTGEPVELKTQAL. The interaction with CALM stretch occupies residues 227 to 237; the sequence is LKSVSERLSIL. A phosphoserine mark is found at serine 235, serine 243, and serine 245. Residues 240–263 are disordered; it reads TRPSESNGQPEVTGEPVELKTQAL.

The protein belongs to the MIP/aquaporin (TC 1.A.8) family. In terms of assembly, homotetramer; each monomer provides an independent water pore. Two homotetramers on opposing membranes can dimerize, forming a cell-cell junction. Interacts with CALM; the calcium-calmodulin/CALM complex interacts with the cytoplasmic domains of two aquaporins, leading to channel closure. Interacts with BFSP1 (via C-terminus); prevents calcium-dependent inhibition of the water channel activity. Post-translationally, subject to partial proteolytic cleavage in the eye lens core. Partial proteolysis promotes interactions between tetramers from adjoining membranes. In terms of processing, fatty acylated at Met-1 and Lys-238. The acyl modifications, in decreasing order of ion abundance, are: oleoyl (C18:1) &gt; palmitoyl (C16:0) &gt; stearoyl (C18:0) &gt; eicosenoyl (C20:1) &gt; dihomo-gamma-linolenoyl (C20:3) &gt; palmitoleoyl (C16:1) &gt; eicosadienoyl (C20:2). In terms of tissue distribution, detected in eye lens (at protein level).

The protein localises to the cell membrane. It localises to the cell junction. It catalyses the reaction H2O(in) = H2O(out). Its activity is regulated as follows. The water channel activity is inhibited by calcium through calmodulin/CALM. Functionally, aquaporins form homotetrameric transmembrane channels, with each monomer independently mediating water transport across the plasma membrane along its osmotic gradient. Specifically expressed in lens fiber cells, this aquaporin is crucial for maintaining lens water homeostasis and transparency. Beyond water permeability, it also acts as a cell-to-cell adhesion molecule, forming thin junctions between lens fiber cells that are essential for maintaining the ordered structure and transparency of the lens. This is Lens fiber major intrinsic protein from Ovis aries (Sheep).